A 110-amino-acid chain; its full sequence is uncharacterized protein (110 aa).

Disordered stretches follow at residues 1-42 and 66-110; these read MEWG…RAQQ and RQLG…AAEP. Residues 36–68 adopt a coiled-coil conformation; it reads REERAQQLLDAVEQRQRQLLDTIAACEEMLRQL.

This is an uncharacterized protein from Homo sapiens (Human).